The chain runs to 63 residues: DNA-directed RNA polymerases I, II, and III subunit RPABC4 (63 aa).

Positions 24, 27, 41, and 44 each coordinate Zn(2+). The C4-type zinc finger occupies 24 to 44 (CADCGARNTIQAKEVIRCREC).

Belongs to the archaeal Rpo12/eukaryotic RPC10 RNA polymerase subunit family. In terms of assembly, component of the RNA polymerase I (Pol I), RNA polymerase II (Pol II) and RNA polymerase III (Pol III) complexes consisting of 14, 12 and 17 subunits, respectively.

It localises to the nucleus. Its function is as follows. DNA-dependent RNA polymerase catalyzes the transcription of DNA into RNA using the four ribonucleoside triphosphates as substrates. Common component of RNA polymerases I, II and III which synthesize ribosomal RNA precursors, mRNA precursors and many functional non-coding RNAs, and a small RNAs, such as 5S rRNA and tRNAs, respectively. In Schizosaccharomyces pombe (strain 972 / ATCC 24843) (Fission yeast), this protein is DNA-directed RNA polymerases I, II, and III subunit RPABC4 (rpc10).